The sequence spans 255 residues: MSFIVVIPARYHSTRLPAKPLLDILGQTMIERVTNQALKSGAKQVIVATDDQRIVDALKHLNEIDVCMTSKDHQSGTDRLAEVCQQFKLADDEIIVNVQGDEPLIPPSVIIQVATNLQQNSAASVATLSAPIEDVADVFNTNAVKVVCDKNNMALYFSRATIPWNRDDFSVENQAEKSVDFTALQRHIGIYAYRASFLRQYATLSVSPLELLEKLEQLRVLWHGFKIHVEQANKIPPPGIDTQDDLQRVIDCLSH.

It belongs to the KdsB family.

It is found in the cytoplasm. The catalysed reaction is 3-deoxy-alpha-D-manno-oct-2-ulosonate + CTP = CMP-3-deoxy-beta-D-manno-octulosonate + diphosphate. It participates in nucleotide-sugar biosynthesis; CMP-3-deoxy-D-manno-octulosonate biosynthesis; CMP-3-deoxy-D-manno-octulosonate from 3-deoxy-D-manno-octulosonate and CTP: step 1/1. The protein operates within bacterial outer membrane biogenesis; lipopolysaccharide biosynthesis. Its function is as follows. Activates KDO (a required 8-carbon sugar) for incorporation into bacterial lipopolysaccharide in Gram-negative bacteria. In Psychromonas ingrahamii (strain DSM 17664 / CCUG 51855 / 37), this protein is 3-deoxy-manno-octulosonate cytidylyltransferase.